Consider the following 450-residue polypeptide: Thiamine biosynthesis regulatory protein (450 aa).

Residues 1–12 (MVNSKRQQRSKK) show a composition bias toward basic residues. The disordered stretch occupies residues 1 to 23 (MVNSKRQQRSKKVASSSKVPPTK). Positions 13–23 (VASSSKVPPTK) are enriched in low complexity. Residues 30 to 57 (CWACRFKKRRCDENRPICSLCAKHGDNC) constitute a DNA-binding region (zn(2)-C6 fungal-type). Residues 210–234 (TDQLPSPGHSMSSAEETTTAALSSP) are disordered.

The protein localises to the nucleus. In terms of biological role, positive regulator of thiamine biosynthesis. The sequence is that of Thiamine biosynthesis regulatory protein (THI2) from Saccharomyces cerevisiae (strain ATCC 204508 / S288c) (Baker's yeast).